The primary structure comprises 492 residues: Probable beta-1,4-xylosyltransferase IRX14H (492 aa).

Residues 1–33 (MKLSVFRLSYWNRRGSSFRSSPSLDPSFDGKSP) are Cytoplasmic-facing. Residues 34 to 54 (SSVFWFVIHGLCCLISLILGF) form a helical; Signal-anchor for type II membrane protein membrane-spanning segment. The Lumenal segment spans residues 55-492 (RFSHLVLFFL…FDGVKVSATS (438 aa)). N-linked (GlcNAc...) asparagine glycans are attached at residues Asn-99, Asn-196, and Asn-314. The interval 457-492 (IKEAKSNSKPRVSKSKSYKEKQEPKAFDGVKVSATS) is disordered. Residues 473 to 484 (SYKEKQEPKAFD) are compositionally biased toward basic and acidic residues.

The protein belongs to the glycosyltransferase 43 family. In terms of tissue distribution, expressed in developing interfascicular fibers and xylem cells in stems and developing secondary xylem in roots.

Its subcellular location is the golgi apparatus membrane. Its function is as follows. Involved in the synthesis of the hemicellulose glucuronoxylan, a major component of secondary cell walls. Probably involved in the elongation of glucuronoxylan xylosyl backbone. This Arabidopsis thaliana (Mouse-ear cress) protein is Probable beta-1,4-xylosyltransferase IRX14H (IRX14H).